A 498-amino-acid chain; its full sequence is Phenylalanine--tRNA ligase alpha subunit (498 aa).

L-phenylalanine is bound by residues Thr328, 372 to 374, and Tyr412; that span reads QVE. A Mg(2+)-binding site is contributed by Glu414. Phe438 contacts L-phenylalanine.

Belongs to the class-II aminoacyl-tRNA synthetase family. Phe-tRNA synthetase alpha subunit type 2 subfamily. As to quaternary structure, tetramer of two alpha and two beta subunits. Requires Mg(2+) as cofactor.

It localises to the cytoplasm. It catalyses the reaction tRNA(Phe) + L-phenylalanine + ATP = L-phenylalanyl-tRNA(Phe) + AMP + diphosphate + H(+). This Drosophila melanogaster (Fruit fly) protein is Phenylalanine--tRNA ligase alpha subunit.